The following is a 62-amino-acid chain: MIPVRCFTCGKVISTAWEEFKQRRDAGEDPGAILDDLGLTQYCCRRMLLTHKEIIDELNPYQ.

Zn(2+) is bound by residues cysteine 6, cysteine 9, cysteine 43, and cysteine 44.

This sequence belongs to the archaeal Rpo10/eukaryotic RPB10 RNA polymerase subunit family. In terms of assembly, part of the RNA polymerase complex. The cofactor is Zn(2+).

It is found in the cytoplasm. It carries out the reaction RNA(n) + a ribonucleoside 5'-triphosphate = RNA(n+1) + diphosphate. In terms of biological role, DNA-dependent RNA polymerase (RNAP) catalyzes the transcription of DNA into RNA using the four ribonucleoside triphosphates as substrates. This chain is DNA-directed RNA polymerase subunit Rpo10, found in Methanosphaerula palustris (strain ATCC BAA-1556 / DSM 19958 / E1-9c).